A 190-amino-acid chain; its full sequence is Probable GTP-binding protein EngB (190 aa).

The EngB-type G domain occupies 22-190 (VKREVAFAGR…LNELLKILIP (169 aa)). GTP is bound by residues 30-37 (GRSNVGKS), 56-60 (GKTRS), 74-77 (DLPG), 141-144 (TKTD), and 173-175 (FSA). Mg(2+)-binding residues include serine 37 and threonine 58.

It belongs to the TRAFAC class TrmE-Era-EngA-EngB-Septin-like GTPase superfamily. EngB GTPase family. It depends on Mg(2+) as a cofactor.

In terms of biological role, necessary for normal cell division and for the maintenance of normal septation. This is Probable GTP-binding protein EngB from Kosmotoga olearia (strain ATCC BAA-1733 / DSM 21960 / TBF 19.5.1).